Consider the following 692-residue polypeptide: Threonine--tRNA ligase (692 aa).

Positions 2–59 constitute a TGS domain; sequence AEAHISITVNGEAKEVEASQTGVELFADDKNIIAVRLNGELRDLYTPLHDGDNVESVT. The catalytic stretch occupies residues 255–561; that stretch reads DHRKLGQEMD…LLEHYAGAFP (307 aa). Zn(2+) contacts are provided by Cys360, His411, and His538.

Belongs to the class-II aminoacyl-tRNA synthetase family. As to quaternary structure, homodimer. It depends on Zn(2+) as a cofactor.

The protein resides in the cytoplasm. The catalysed reaction is tRNA(Thr) + L-threonine + ATP = L-threonyl-tRNA(Thr) + AMP + diphosphate + H(+). In terms of biological role, catalyzes the attachment of threonine to tRNA(Thr) in a two-step reaction: L-threonine is first activated by ATP to form Thr-AMP and then transferred to the acceptor end of tRNA(Thr). Also edits incorrectly charged L-seryl-tRNA(Thr). The chain is Threonine--tRNA ligase from Bifidobacterium animalis subsp. lactis (strain AD011).